Here is a 968-residue protein sequence, read N- to C-terminus: Pumilio homolog 1 (968 aa).

2 disordered regions span residues 1-25 and 138-171; these read MIPE…DYEK and NNVL…TGAS. Serine 194 bears the Phosphoserine mark. Disordered regions lie at residues 204–240, 260–303, and 360–382; these read GHGH…SQGI, GTPD…VTSG, and KSDQ…PHGS. 2 stretches are compositionally biased toward polar residues: residues 211 to 220 and 227 to 238; these read QQPSRPASRN and DSNNNLSPSASQ. Threonine 261 carries the phosphothreonine modification. Over residues 291–303 the composition is skewed to polar residues; it reads TSNQSPFNGVTSG. A PUM-HD domain is found at 610-950; the sequence is FGSSMLEEFK…HVVARIEKLV (341 aa). Pumilio repeat units follow at residues 630-665, 666-701, 702-737, 738-773, 774-810, 811-846, 847-882, and 883-924; these read EIAG…MVYE, EIMP…ELAE, KLFD…KMVK, ELDG…FIIS, TFFG…KVME, EILS…VIIK, ELAG…LLVN, and EMLG…LILT.

The protein resides in the cytoplasm. In terms of biological role, sequence-specific RNA-binding protein that regulates translation and mRNA stability by binding the 3'-UTR of target mRNAs. Binds the APUM-binding elements (APBEs) in the 3'-UTR mRNA sequence of CLV1, PNH, WUS and FAS2. This Arabidopsis thaliana (Mouse-ear cress) protein is Pumilio homolog 1 (APUM1).